The sequence spans 82 residues: Neuromacin (82 aa).

The first 23 residues, 1 to 23, serve as a signal peptide directing secretion; sequence MALLNKLLCFALVFMIFGEFVTP. Intrachain disulfides connect cysteine 25–cysteine 32, cysteine 47–cysteine 51, cysteine 61–cysteine 69, and cysteine 79–cysteine 81.

The protein belongs to the macin family.

The protein resides in the secreted. This Hirudo medicinalis (Medicinal leech) protein is Neuromacin.